The primary structure comprises 398 residues: Probable aminomethyltransferase (398 aa).

The protein belongs to the GcvT family. In terms of assembly, the glycine cleavage system is composed of four proteins: P, T, L and H.

The enzyme catalyses N(6)-[(R)-S(8)-aminomethyldihydrolipoyl]-L-lysyl-[protein] + (6S)-5,6,7,8-tetrahydrofolate = N(6)-[(R)-dihydrolipoyl]-L-lysyl-[protein] + (6R)-5,10-methylene-5,6,7,8-tetrahydrofolate + NH4(+). In terms of biological role, the glycine cleavage system catalyzes the degradation of glycine. In Pyrococcus furiosus (strain ATCC 43587 / DSM 3638 / JCM 8422 / Vc1), this protein is Probable aminomethyltransferase.